A 416-amino-acid chain; its full sequence is Multifunctional CCA protein (416 aa).

ATP contacts are provided by glycine 8 and arginine 11. Residues glycine 8 and arginine 11 each coordinate CTP. The Mg(2+) site is built by aspartate 21 and aspartate 23. Positions 91, 137, and 140 each coordinate ATP. Residues arginine 91, arginine 137, and arginine 140 each contribute to the CTP site. One can recognise an HD domain in the interval 228–329 (TGLHTMLVLA…IKLFDKADFW (102 aa)).

This sequence belongs to the tRNA nucleotidyltransferase/poly(A) polymerase family. Bacterial CCA-adding enzyme type 1 subfamily. As to quaternary structure, monomer. Can also form homodimers and oligomers. It depends on Mg(2+) as a cofactor. Requires Ni(2+) as cofactor.

It catalyses the reaction a tRNA precursor + 2 CTP + ATP = a tRNA with a 3' CCA end + 3 diphosphate. The catalysed reaction is a tRNA with a 3' CCA end + 2 CTP + ATP = a tRNA with a 3' CCACCA end + 3 diphosphate. Catalyzes the addition and repair of the essential 3'-terminal CCA sequence in tRNAs without using a nucleic acid template. Adds these three nucleotides in the order of C, C, and A to the tRNA nucleotide-73, using CTP and ATP as substrates and producing inorganic pyrophosphate. tRNA 3'-terminal CCA addition is required both for tRNA processing and repair. Also involved in tRNA surveillance by mediating tandem CCA addition to generate a CCACCA at the 3' terminus of unstable tRNAs. While stable tRNAs receive only 3'-terminal CCA, unstable tRNAs are marked with CCACCA and rapidly degraded. This is Multifunctional CCA protein from Shewanella sp. (strain ANA-3).